Here is a 345-residue protein sequence, read N- to C-terminus: tRNA pseudouridine synthase B (345 aa).

The active-site Nucleophile is the Asp-39.

This sequence belongs to the pseudouridine synthase TruB family. Type 1 subfamily.

It carries out the reaction uridine(55) in tRNA = pseudouridine(55) in tRNA. Responsible for synthesis of pseudouridine from uracil-55 in the psi GC loop of transfer RNAs. The protein is tRNA pseudouridine synthase B of Rickettsia rickettsii (strain Iowa).